Here is a 660-residue protein sequence, read N- to C-terminus: Pseudouridylate synthase 7 homolog (660 aa).

The tract at residues 1–99 (MEMTSTSLKR…EAGEEEEAES (99 aa)) is disordered. Position 7 is a phosphoserine (serine 7). Over residues 22 to 32 (TPHDETKKQKV) the composition is skewed to basic and acidic residues. Over residues 76–99 (QEEEEEEEEEDGLSEAGEEEEAES) the composition is skewed to acidic residues. A Phosphoserine modification is found at serine 126. The Nucleophile role is filled by aspartate 293. The region spanning 369–579 (GFINYYGMQR…SGAYRRIIIR (211 aa)) is the TRUD domain.

It belongs to the pseudouridine synthase TruD family. In terms of assembly, interacts with SIRT1.

It is found in the nucleus. The catalysed reaction is a uridine in tRNA = a pseudouridine in tRNA. The enzyme catalyses uridine(13) in tRNA = pseudouridine(13) in tRNA. It carries out the reaction a uridine in mRNA = a pseudouridine in mRNA. Its function is as follows. Pseudouridylate synthase that catalyzes pseudouridylation of RNAs. Acts as a regulator of protein synthesis in embryonic stem cells by mediating pseudouridylation of RNA fragments derived from tRNAs (tRFs): pseudouridylated tRFs inhibit translation by targeting the translation initiation complex. Also catalyzes pseudouridylation of mRNAs: mediates pseudouridylation of mRNAs with the consensus sequence 5'-UGUAG-3'. Acts as a regulator of pre-mRNA splicing by mediating pseudouridylation of pre-mRNAs at locations associated with alternatively spliced regions. Pseudouridylation of pre-mRNAs near splice sites directly regulates mRNA splicing and mRNA 3'-end processing. In addition to mRNAs and tRNAs, binds other types of RNAs, such as snRNAs, Y RNAs and vault RNAs, suggesting that it can catalyze pseudouridylation of many RNA types. This is Pseudouridylate synthase 7 homolog from Mus musculus (Mouse).